Consider the following 492-residue polypeptide: NADH-quinone oxidoreductase subunit N (492 aa).

Transmembrane regions (helical) follow at residues 13–33, 42–62, 79–99, 111–131, 133–153, 168–188, 211–231, 251–271, 284–304, 318–340, 344–366, 388–408, 426–446, and 463–483; these read MMTP…MDLF, PLAW…IGLI, FGKA…LLAF, GEFY…ASSG, LITL…LAGI, VING…IFGL, YILA…ISSV, FLSV…FITI, SLLF…MIIG, FAYS…SWVM, IWFY…QRIS, AVAM…AGFI, VLAA…FGIF, and PIGL…FGVV.

This sequence belongs to the complex I subunit 2 family. As to quaternary structure, NDH-1 is composed of 14 different subunits. Subunits NuoA, H, J, K, L, M, N constitute the membrane sector of the complex.

The protein resides in the cell membrane. It catalyses the reaction a quinone + NADH + 5 H(+)(in) = a quinol + NAD(+) + 4 H(+)(out). Functionally, NDH-1 shuttles electrons from NADH, via FMN and iron-sulfur (Fe-S) centers, to quinones in the respiratory chain. The immediate electron acceptor for the enzyme in this species is believed to be a menaquinone. Couples the redox reaction to proton translocation (for every two electrons transferred, four hydrogen ions are translocated across the cytoplasmic membrane), and thus conserves the redox energy in a proton gradient. The chain is NADH-quinone oxidoreductase subunit N from Geobacillus sp. (strain WCH70).